A 205-amino-acid chain; its full sequence is Ras-related protein rab-6.2 (205 aa).

GTP contacts are provided by residues 18–25, threonine 42, 66–70, and 124–127; these read EQSVGKTS, TAGQE, and KTDL. 2 S-geranylgeranyl cysteine lipidation sites follow: cysteine 203 and cysteine 205. Cysteine 205 bears the Cysteine methyl ester mark.

It belongs to the small GTPase superfamily. Rab family. In terms of assembly, interacts with GARP complex component vps-52. Interacts (in GTP-bound form) with lin-10. May interact (in GTP-bound form) with eat-17. As to expression, highly expressed in body wall muscles, pharyngeal and vulval muscles, hypodermis, intestine, the gonad, coelomocytes, and neurons, including command interneuron (at protein level). Highly expressed in the terminal bulb muscles.

The protein localises to the perikaryon. Its subcellular location is the cell projection. It localises to the dendrite. The protein resides in the golgi apparatus. It is found in the cytoplasmic vesicle. Functionally, the small GTPases Rab are key regulators of intracellular membrane trafficking, from the formation of transport vesicles to their fusion with membranes. Rabs cycle between an inactive GDP-bound form and an active GTP-bound form that is able to recruit to membranes different set of downstream effectors directly responsible for vesicle formation, movement, tethering and fusion. In its active GTP-bound form, acts redundantly with rab-6.1 (in its active GTP-bound form) to positively regulate the retrograde trafficking of cargo molecules from endosomes to the Golgi compartment. Required for the retrograde trafficking of glr-1, a subunit of AMPA-type glutamate receptors (AMPRs), out of early endosomes and into the Golgi compartment in neurons. Its role in glr-1 trafficking may partly be mediated by its interaction with lin-10 and association with components of the retromer complex such as rme-8. Together with rab-6.2, promotes the retrograde trafficking of mig-14 from endosomes to Golgi structures in the intestine. Plays a role in the epidermis to promote cuticle integrity and impermeability of the cuticle barrier to exogenous molecules. May have a role in the glycosylation of the cuticular surface. Required for seam cell division and alae formation. Required for grinder formation, which is the feeding organ that breaks down food. In contrast to rab-6.1, may play a minor role in the exocytosis of secretory vesicles (cortical granules) during the oocyte-to-embryo transition. This is Ras-related protein rab-6.2 from Caenorhabditis elegans.